A 494-amino-acid chain; its full sequence is MILGIILGLFIYIYLINIKFFNRAVPSSLLVGENKLKCKFPSGPLILPIIGSLYKLSLKYPHLSFKQLSDKYGKVFSLKMGSIDTIVINDINFLQKSFRDNPTFFSQRFHLPSFYYMGKYQGIIFGNGSHWRKLKDILSSSITKSKSRQMEELFYNEYFKAEEYLLKKINQDNNIDMGPIFKRILLNILYRFLFGVSFEYDDNLLSKEFYSFIQSYNKLFEYLAKQPADFIPILKPFNNYKEIEKEYNNCLNFFQPLIDNILKNISDDDDDGNEPKCFLEYFISEIRKDTSNLIKITDLPYICFDIIVAGIVTTSTTMDWMLLYLTNYPNIQEKLFFEINTPNHPLHKDKLQFPYLNSIIKETLRISPPAPFALPHICTDDIVIDDIFIPKNTQVIPNIYGCNRSNIESSESNVFNPDHFLSKDELNIGQCAFSFGSRQCPGANVADSIMFLVSTKLYKTFKFERTTTQLNDENGHFTRSLSPFEFKSKLIIRK.

Residues 1-21 (MILGIILGLFIYIYLINIKFF) form a helical membrane-spanning segment. Cys-440 contributes to the heme binding site.

The protein belongs to the cytochrome P450 family. Requires heme as cofactor.

Its subcellular location is the membrane. The chain is Probable cytochrome P450 515A1 (cyp515A1) from Dictyostelium discoideum (Social amoeba).